The chain runs to 219 residues: Small ribosomal subunit protein uS3c (219 aa).

Positions 43-120 constitute a KH type-2 domain; it reads IQNYIQKNMQ…KINITITKIT (78 aa).

This sequence belongs to the universal ribosomal protein uS3 family. In terms of assembly, part of the 30S ribosomal subunit.

It is found in the plastid. The protein localises to the chloroplast. The polypeptide is Small ribosomal subunit protein uS3c (rps3) (Oenothera elata subsp. hookeri (Hooker's evening primrose)).